We begin with the raw amino-acid sequence, 396 residues long: Probable tRNA sulfurtransferase (396 aa).

The THUMP domain occupies 58-169; the sequence is NQFIEKLKMV…KKNIYVFTRS (112 aa). Residues 187–188, 212–213, arginine 269, glycine 291, and glutamine 300 each bind ATP; these read LL and YF.

The protein belongs to the ThiI family.

Its subcellular location is the cytoplasm. It catalyses the reaction [ThiI sulfur-carrier protein]-S-sulfanyl-L-cysteine + a uridine in tRNA + 2 reduced [2Fe-2S]-[ferredoxin] + ATP + H(+) = [ThiI sulfur-carrier protein]-L-cysteine + a 4-thiouridine in tRNA + 2 oxidized [2Fe-2S]-[ferredoxin] + AMP + diphosphate. It carries out the reaction [ThiS sulfur-carrier protein]-C-terminal Gly-Gly-AMP + S-sulfanyl-L-cysteinyl-[cysteine desulfurase] + AH2 = [ThiS sulfur-carrier protein]-C-terminal-Gly-aminoethanethioate + L-cysteinyl-[cysteine desulfurase] + A + AMP + 2 H(+). Its pathway is cofactor biosynthesis; thiamine diphosphate biosynthesis. Its function is as follows. Catalyzes the ATP-dependent transfer of a sulfur to tRNA to produce 4-thiouridine in position 8 of tRNAs, which functions as a near-UV photosensor. Also catalyzes the transfer of sulfur to the sulfur carrier protein ThiS, forming ThiS-thiocarboxylate. This is a step in the synthesis of thiazole, in the thiamine biosynthesis pathway. The sulfur is donated as persulfide by IscS. This chain is Probable tRNA sulfurtransferase, found in Halothermothrix orenii (strain H 168 / OCM 544 / DSM 9562).